Reading from the N-terminus, the 230-residue chain is uncharacterized protein (230 aa).

Disordered stretches follow at residues 63-90 and 194-230; these read TDCQ…KKTI and KKLE…YKEH. Positions 194–217 are enriched in basic and acidic residues; sequence KKLEEREQMDKHPQDRDNKDKEVN.

This is an uncharacterized protein from Caenorhabditis elegans.